Consider the following 238-residue polypeptide: Putative csd-like protein HI_1343 (238 aa).

Lysine 146 is subject to N6-(pyridoxal phosphate)lysine.

The protein belongs to the class-V pyridoxal-phosphate-dependent aminotransferase family. Csd subfamily.

This Haemophilus influenzae (strain ATCC 51907 / DSM 11121 / KW20 / Rd) protein is Putative csd-like protein HI_1343.